The sequence spans 393 residues: MTDIQLNGKSTLDTPSATMSAKEKEAKLKSADENNKPPNYKRISDDDLYRHSSQYRMWSYTKDQLQEKRVDTNARAIAYIEENLLKFREAHNLTEEEIKVLEAKAIPLTMEEELDLVNFYAKKVQVIAQHLNLPTEVVATAISFFRRFFLENSVMQIDPKSIVHTTIFLACKSENYFISVDSFAQKAKSTRDSVLKFEFKLLESLKFSLLNHHPYKPLHGFFLDIQNVLYGKVDLNYMGQIYDRCKKRITAALLTDVVYFYTPPQITLATLLIEDEALVTRYLETKFPSREGSQESVPGNEKEEPQNDASTTEKNKEKSTESEEYSIDSAKLLTIIRECKSIIEDCKPPSTEEAKKIAAKNYYCQNPSTLIQKLKRKLNGEDTSSTVEKKQKT.

Residues 1–19 (MTDIQLNGKSTLDTPSATM) are compositionally biased toward polar residues. Disordered stretches follow at residues 1–45 (MTDI…RISD) and 289–325 (SREG…SEEY). Basic and acidic residues-rich tracts occupy residues 21–35 (AKEK…DENN) and 300–321 (NEKE…KSTE).

The protein belongs to the cyclin family. Cyclin C subfamily. In terms of assembly, CCL1 and KIN28 form the TFIIK complex, a component of TFIIH holo complex. Component of a complex consisting of KIN28, CCL1 and TFB3.

Its function is as follows. Regulatory component of the TFIIK complex (KIN28-CCL1 dimer) which is the protein kinase component of transcription factor IIH (TFIIH) and phosphorylates the C-terminal domain of RNA polymerase II during transition from transcription to elongation after preinitiation complex (PIC) formation, thereby positively regulating transcription. TFIIH (or factor B) is essential for both basal and activated transcription, and is involved in nucleotide excision repair (NER) of damaged DNA. TFIIH has DNA-dependent ATPase activity and is essential for polymerase II transcription in vitro. This is Cyclin CCL1 (CCL1) from Saccharomyces cerevisiae (strain ATCC 204508 / S288c) (Baker's yeast).